We begin with the raw amino-acid sequence, 503 residues long: MDLIPNLAVETWLLLAVSLILLYLYGTRTHGLFKKLGIPGPTPLPFLGNALSFRKGYWTFDMECYKKYRKVWGIYDCQQPMLAITDPDMIKTVLVKECYSVFTNRRPFGPVGFMKNAISIAEDEEWKRIRSLLSPTFTSGKLKEMVPIIAQYGDVLVRNLRREAETGKPVTLKHVFGAYSMDVITSTSFGVSIDSLNNPQDPFVENTKKLLRFNPLDPFVLSIKVFPFLTPILEALNITVFPRKVISFLTKSVKQIKEGRLKETQKHRVDFLQLMIDSQNSKDSETHKALSDLELMAQSIIFIFAGYETTSSVLSFIIYELATHPDVQQKVQKEIDTVLPNKAPPTYDTVLQLEYLDMVVNETLRLFPVAMRLERVCKKDVEINGMFIPKGVVVMIPSYVLHHDPKYWTEPEKFLPERFSKKNKDNIDPYIYTPFGSGPRNCIGMRFALVNMKLALVRVLQNFSFKPCKETQIPLKLRFGGLLLTEKPIVLKAESRDETVSGA.

Cys442 contributes to the heme binding site.

The protein belongs to the cytochrome P450 family. The cofactor is heme. As to expression, expressed in fetal liver (at protein level).

The protein localises to the endoplasmic reticulum membrane. Its subcellular location is the microsome membrane. The enzyme catalyses an organic molecule + reduced [NADPH--hemoprotein reductase] + O2 = an alcohol + oxidized [NADPH--hemoprotein reductase] + H2O + H(+). It carries out the reaction 3beta-hydroxyandrost-5-en-17-one + reduced [NADPH--hemoprotein reductase] + O2 = 3beta,16alpha-dihydroxy-androst-5-en-17-one + oxidized [NADPH--hemoprotein reductase] + H2O + H(+). The catalysed reaction is dehydroepiandrosterone 3-sulfate + reduced [NADPH--hemoprotein reductase] + O2 = 16alpha-hydroxydehydroepiandrosterone 3-sulfate + oxidized [NADPH--hemoprotein reductase] + H2O + H(+). It catalyses the reaction testosterone + reduced [NADPH--hemoprotein reductase] + O2 = 6beta,17beta-dihydroxyandrost-4-en-3-one + oxidized [NADPH--hemoprotein reductase] + H2O + H(+). The enzyme catalyses estrone + reduced [NADPH--hemoprotein reductase] + O2 = 2-hydroxyestrone + oxidized [NADPH--hemoprotein reductase] + H2O + H(+). It carries out the reaction estrone + reduced [NADPH--hemoprotein reductase] + O2 = 4-hydroxyestrone + oxidized [NADPH--hemoprotein reductase] + H2O + H(+). The catalysed reaction is estrone + reduced [NADPH--hemoprotein reductase] + O2 = 16alpha-hydroxyestrone + oxidized [NADPH--hemoprotein reductase] + H2O + H(+). It catalyses the reaction 17beta-estradiol + reduced [NADPH--hemoprotein reductase] + O2 = 2-hydroxy-17beta-estradiol + oxidized [NADPH--hemoprotein reductase] + H2O + H(+). The enzyme catalyses 17beta-estradiol + reduced [NADPH--hemoprotein reductase] + O2 = 6beta-hydroxyestradiol-17beta + oxidized [NADPH--hemoprotein reductase] + H2O + H(+). It carries out the reaction all-trans-retinoate + reduced [NADPH--hemoprotein reductase] + O2 = all-trans-4-hydroxyretinoate + oxidized [NADPH--hemoprotein reductase] + H2O + H(+). The catalysed reaction is all-trans-retinoate + reduced [NADPH--hemoprotein reductase] + O2 = all-trans-18-hydroxyretinoate + oxidized [NADPH--hemoprotein reductase] + H2O + H(+). It participates in steroid hormone biosynthesis. The protein operates within cofactor metabolism; retinol metabolism. A cytochrome P450 monooxygenase involved in the metabolism of steroid hormones and vitamins during embryogenesis. Mechanistically, uses molecular oxygen inserting one oxygen atom into a substrate, and reducing the second into a water molecule, with two electrons provided by NADPH via cytochrome P450 reductase (NADPH--hemoprotein reductase). Catalyzes the hydroxylation of carbon-hydrogen bonds. Metabolizes 3beta-hydroxyandrost-5-en-17-one (dehydroepiandrosterone, DHEA), a precursor in the biosynthesis of androgen and estrogen steroid hormones. Exhibits high catalytic activity for the formation of hydroxyestrogens from estrone (E1), particularly D-ring hydroxylated estrone at the C16-alpha position. Mainly hydroxylates all trans-retinoic acid (atRA) to 4-hydroxyretinoate and may play a role in atRA clearance during fetal development. Also involved in the oxidative metabolism of xenobiotics including anticonvulsants. The sequence is that of Cytochrome P450 3A7 from Homo sapiens (Human).